The primary structure comprises 449 residues: Glutamyl-tRNA reductase (449 aa).

Residues 58–61 (TCNR), Ser-121, 126–128 (ETQ), and Gln-132 contribute to the substrate site. Cys-59 functions as the Nucleophile in the catalytic mechanism. 203 to 208 (GLGEMA) is an NADP(+) binding site.

It belongs to the glutamyl-tRNA reductase family. In terms of assembly, homodimer.

The catalysed reaction is (S)-4-amino-5-oxopentanoate + tRNA(Glu) + NADP(+) = L-glutamyl-tRNA(Glu) + NADPH + H(+). Its pathway is porphyrin-containing compound metabolism; protoporphyrin-IX biosynthesis; 5-aminolevulinate from L-glutamyl-tRNA(Glu): step 1/2. Its function is as follows. Catalyzes the NADPH-dependent reduction of glutamyl-tRNA(Glu) to glutamate 1-semialdehyde (GSA). The polypeptide is Glutamyl-tRNA reductase (Helicobacter pylori (strain J99 / ATCC 700824) (Campylobacter pylori J99)).